Here is a 1821-residue protein sequence, read N- to C-terminus: Latent-transforming growth factor beta-binding protein 2 (1821 aa).

Residues 1–35 (MRPRTKARSPGRALRNPWRGFLPLTLALFVGAGHA) form the signal peptide. Disordered stretches follow at residues 38–58 (DPVG…RPGG) and 81–165 (GLQP…RLTG). The interval 94–115 (SPRRPTEAEARRPSRAQQSRRV) is heparin-binding. Composition is skewed to low complexity over residues 108–120 (RAQQ…PPAQ) and 129–145 (QQQP…LPRL). An N-linked (GlcNAc...) asparagine glycan is attached at asparagine 181. Positions 187–219 (IKPVCEPPCQNRGSCSRPQLCVCRSGFRGARCE) constitute an EGF-like 1 domain. Disulfide bonds link cysteine 191-cysteine 201, cysteine 195-cysteine 207, and cysteine 209-cysteine 218. The tract at residues 229-339 (PQNSRLAPRR…AVPLEHPSSP (111 aa)) is disordered. The heparin-binding stretch occupies residues 232 to 249 (SRLAPRRWAERSPNLRRS). A compositionally biased stretch (pro residues) spans 262 to 274 (PPAPQSPPAPQSP). Composition is skewed to polar residues over residues 280–292 (SGLS…QQHV) and 304–314 (ATASSQLSSNA). N-linked (GlcNAc...) asparagine glycosylation is present at asparagine 343. 344-354 (LTEKIKKIKIV) serves as a coordination point for heparin. The short motif at 375 to 377 (RGD) is the Cell attachment site element. Residues 396–428 (RIYFCQIPCLNGGRCIGRDECWCPANSTGKFCH) form the EGF-like 2 domain. 3 cysteine pairs are disulfide-bonded: cysteine 400/cysteine 410, cysteine 404/cysteine 416, and cysteine 418/cysteine 427. The N-linked (GlcNAc...) asparagine glycan is linked to asparagine 421. A Phosphoserine modification is found at serine 506. The interval 510 to 544 (RPPPWLPASPGHSLWDSNNIPARSGEPPRPLPPAA) is disordered. The TB 1 domain maps to 552–604 (GRCYLNTVNGQCANPLLELTTQEDCCGSVGAFWGVTLCAPCPPRPASPVIENG). 3 cysteine pairs are disulfide-bonded: cysteine 554–cysteine 576, cysteine 563–cysteine 589, and cysteine 577–cysteine 592. Residue asparagine 616 is glycosylated (N-linked (GlcNAc...) asparagine). The EGF-like 3; calcium-binding domain maps to 622–662 (DINECLTLGLCKDAECVNTRGSYLCTCRPGLMLDPSRSRCV). Cystine bridges form between cysteine 626-cysteine 637, cysteine 632-cysteine 646, cysteine 648-cysteine 661, cysteine 674-cysteine 696, cysteine 683-cysteine 709, cysteine 697-cysteine 712, and cysteine 698-cysteine 724. The TB 2 domain maps to 672 to 724 (GLCYRSLGPGTCTLPLAQRITKQICCCSRVGKAWGSECEKCPLPGTEAFREIC). Residues 744–757 (AEEEELARPPREQG) are compositionally biased toward basic and acidic residues. The disordered stretch occupies residues 744 to 772 (AEEEELARPPREQGQRSSGALPGPAERQP). Asparagine 811 carries an N-linked (GlcNAc...) asparagine glycan. The EGF-like 4 domain occupies 844 to 886 (GIDRCAAGATNVCGPGTCVNLPDGYRCVCSPGYQLHPSQAYCT). 49 cysteine pairs are disulfide-bonded: cysteine 848-cysteine 861, cysteine 856-cysteine 870, cysteine 872-cysteine 885, cysteine 891-cysteine 902, cysteine 896-cysteine 911, cysteine 913-cysteine 928, cysteine 934-cysteine 945, cysteine 940-cysteine 954, cysteine 956-cysteine 968, cysteine 974-cysteine 985, cysteine 980-cysteine 994, cysteine 997-cysteine 1008, cysteine 1014-cysteine 1025, cysteine 1020-cysteine 1034, cysteine 1036-cysteine 1049, cysteine 1055-cysteine 1066, cysteine 1061-cysteine 1075, cysteine 1078-cysteine 1091, cysteine 1097-cysteine 1108, cysteine 1103-cysteine 1117, cysteine 1120-cysteine 1133, cysteine 1139-cysteine 1151, cysteine 1146-cysteine 1160, cysteine 1162-cysteine 1174, cysteine 1180-cysteine 1192, cysteine 1186-cysteine 1201, cysteine 1203-cysteine 1216, cysteine 1222-cysteine 1233, cysteine 1228-cysteine 1242, cysteine 1244-cysteine 1257, cysteine 1263-cysteine 1276, cysteine 1271-cysteine 1285, cysteine 1289-cysteine 1301, cysteine 1307-cysteine 1319, cysteine 1313-cysteine 1328, cysteine 1330-cysteine 1343, cysteine 1349-cysteine 1361, cysteine 1356-cysteine 1370, cysteine 1372-cysteine 1386, cysteine 1413-cysteine 1436, cysteine 1423-cysteine 1448, cysteine 1437-cysteine 1451, cysteine 1438-cysteine 1463, cysteine 1489-cysteine 1502, cysteine 1497-cysteine 1511, cysteine 1513-cysteine 1526, cysteine 1532-cysteine 1542, cysteine 1537-cysteine 1551, and cysteine 1553-cysteine 1566. Positions 887–929 (DDNECLRDPCKGKGRCINRVGSYSCFCYPGYTLATSGATQECQ) constitute an EGF-like 5; calcium-binding domain. The EGF-like 6; calcium-binding domain occupies 930-969 (DINECEQPGVCSGGQCTNTEGSYHCECDQGYIMVRKGHCQ). Residues 970–1009 (DINECRHPGTCPDGRCVNSPGSYTCLACEEGYRGQSGSCV) form the EGF-like 7; calcium-binding domain. An EGF-like 8; calcium-binding domain is found at 1010-1050 (DVNECLTPGVCAHGKCTNLEGSFRCSCEQGYEVTSDEKGCQ). An EGF-like 9; calcium-binding domain is found at 1051 to 1092 (DVDECASRASCPTGLCLNTEGSFACSACENGYWVNEDGTACE). Residues 1093–1134 (DLDECAFPGVCPSGVCTNTAGSFSCKDCDGGYRPSPLGDSCE) form the EGF-like 10; calcium-binding domain. Positions 1135-1175 (DVDECEDPQSSCLGGECKNTVGSYQCLCPQGFQLANGTVCE) constitute an EGF-like 11; calcium-binding domain. Asparagine 1170 is a glycosylation site (N-linked (GlcNAc...) asparagine). One can recognise an EGF-like 12; calcium-binding domain in the interval 1176-1217 (DVNECMGEEHCAPHGECLNSHGSFFCLCAPGFVSAEGGTSCQ). Residues 1218–1258 (DVDECATTDPCVGGHCVNTEGSFNCLCETGFQPSPESGECV) enclose the EGF-like 13; calcium-binding domain. Residues 1259–1302 (DIDECEDYGDPVCGTWKCENSPGSYRCVLGCQPGFHMAPNGDCI) form the EGF-like 14; calcium-binding domain. Residues 1303–1344 (DIDECANDTMCGSHGFCDNTDGSFRCLCDQGFEISPSGWDCV) enclose the EGF-like 15; calcium-binding domain. A glycan (N-linked (GlcNAc...) asparagine) is linked at asparagine 1309. The 43-residue stretch at 1345–1387 (DVNECELMLAVCGAALCENVEGSFLCLCASDLEEYDAQEGHCR) folds into the EGF-like 16; calcium-binding domain. Residues 1411–1463 (MDCYSGQKGHAPCSSVLGRNTTQAECCCTQGASWGDACDLCPSEDSAEFSEIC) enclose the TB 3 domain. Asparagine 1430 is a glycosylation site (N-linked (GlcNAc...) asparagine). Positions 1485-1527 (DADECVIFGPGLCPNGRCLNTVPGYVCLCNPGFHYDASHKKCE) constitute an EGF-like 17; calcium-binding domain. The 40-residue stretch at 1528 to 1567 (DHDECQDLACENGECVNTEGSFHCFCSPPLTLDLSQQRCM) folds into the EGF-like 18; calcium-binding domain. Residue asparagine 1568 is glycosylated (N-linked (GlcNAc...) asparagine). In terms of domain architecture, TB 4 spans 1584–1636 (DICWKKVTNDVCSEPLRGHRTTYTECCCQDGEAWSQQCALCPPRSSEVYAQLC). Cystine bridges form between cysteine 1586-cysteine 1609, cysteine 1595-cysteine 1621, cysteine 1610-cysteine 1624, cysteine 1611-cysteine 1636, cysteine 1737-cysteine 1748, cysteine 1743-cysteine 1757, cysteine 1759-cysteine 1772, cysteine 1778-cysteine 1793, cysteine 1788-cysteine 1802, and cysteine 1804-cysteine 1817. The tract at residues 1639–1821 (ARIEAEREAG…AGPPHCTAKE (183 aa)) is C-terminal domain. Positions 1733–1773 (QAEECGILNGCENGRCVRVREGYTCDCFEGFQLDAAHMACV) constitute an EGF-like 19; calcium-binding domain. In terms of domain architecture, EGF-like 20; calcium-binding spans 1774–1818 (DVNECDDLNGPAVLCVHGYCENTEGSYRCHCSPGYVAEAGPPHCT).

The protein belongs to the LTBP family. As to quaternary structure, forms part of the large latent transforming growth factor beta precursor complex; removal is essential for activation of complex. Interacts with SDC4. Interacts (via C-terminal domain) with FBN1 (via N-terminal domain) in a Ca(+2)-dependent manner. Post-translationally, N-Glycosylated. In terms of processing, contains hydroxylated asparagine residues. As to expression, expressed in the aorta (at protein level). Expressed in lung, weakly expressed in heart, placenta, liver and skeletal muscle.

It localises to the secreted. It is found in the extracellular space. The protein resides in the extracellular matrix. May play an integral structural role in elastic-fiber architectural organization and/or assembly. The polypeptide is Latent-transforming growth factor beta-binding protein 2 (LTBP2) (Homo sapiens (Human)).